The sequence spans 140 residues: ATP synthase epsilon chain (140 aa).

Belongs to the ATPase epsilon chain family. F-type ATPases have 2 components, CF(1) - the catalytic core - and CF(0) - the membrane proton channel. CF(1) has five subunits: alpha(3), beta(3), gamma(1), delta(1), epsilon(1). CF(0) has three main subunits: a, b and c.

It localises to the cell inner membrane. Its function is as follows. Produces ATP from ADP in the presence of a proton gradient across the membrane. The polypeptide is ATP synthase epsilon chain (Herminiimonas arsenicoxydans).